A 130-amino-acid chain; its full sequence is UPF0251 protein Mevan_1492 (130 aa).

This sequence belongs to the UPF0251 family.

The sequence is that of UPF0251 protein Mevan_1492 from Methanococcus vannielii (strain ATCC 35089 / DSM 1224 / JCM 13029 / OCM 148 / SB).